We begin with the raw amino-acid sequence, 240 residues long: MSVSRRDVLKFAAATPGVLGLGVVASSLRAAPASAGSLGTLLDYAAGVIPASQIRAAGAVGAIRYVSDRRPGGAWMLGKPIQLSEARDLSGNGLKIVSCYQYGKGSTADWLGGASAGVQHARRGSELHAAAGGPTSAPIYASIDDNPSYEQYKNQIVPYLRSWESVIGHQRTGVYANSKTIDWAVNDGLGSYFWQHNWGSPKGYTHPAAHLHQVEIDKRKVGGVGVDVNQILKPQFGQWA.

Residues Met-1–Ala-33 constitute a signal peptide (tat-type signal).

In terms of processing, predicted to be exported by the Tat system. The position of the signal peptide cleavage has not been experimentally proven.

It is found in the secreted. The enzyme catalyses Hydrolysis of (1-&gt;4)-beta-linkages between N-acetylmuramic acid and N-acetyl-D-glucosamine residues in a peptidoglycan and between N-acetyl-D-glucosamine residues in chitodextrins.. It participates in cell wall degradation; peptidoglycan degradation. Its function is as follows. May function as a peptidoglycan hydrolase with glycosidase activity. In vitro, displays esterase activity toward p-nitrophenyl esters of various acyl chain length (C4 to C16), with a preference for p-nitrophenyl butyrate (C4). This Mycobacterium tuberculosis (strain ATCC 25618 / H37Rv) protein is Putative peptidoglycan hydrolase Rv2525c.